Consider the following 264-residue polypeptide: Major prion protein (264 aa).

Positions Met1–Cys24 are cleaved as a signal peptide. The interval Lys25–Ala241 is interaction with GRB2, ERI3 and SYN1. Residues Arg27–Asn119 are disordered. 6 consecutive repeat copies span residues Ser54 to Gln62, Pro63 to Gln70, Pro71 to Gln78, Pro79 to Gln86, Pro87 to Gln94, and Pro95 to Gln103. Residues Ser54–Gln103 are 6 X 8 AA tandem repeats of P-H-G-G-G-W-G-Q. Over residues Gln55–Gly105 the composition is skewed to gly residues. Positions 72, 73, 74, 80, 81, 82, 88, 89, 90, 96, 98, and 99 each coordinate Cu(2+). An intrachain disulfide couples Cys190 to Cys225. Residues Asn192 and Asn208 are each glycosylated (N-linked (GlcNAc...) asparagine). Ala241 carries the GPI-anchor amidated alanine lipid modification. A propeptide spans Ser242 to Gly264 (removed in mature form).

It belongs to the prion family. In terms of assembly, monomer and homodimer. Has a tendency to aggregate into amyloid fibrils containing a cross-beta spine, formed by a steric zipper of superposed beta-strands. Soluble oligomers may represent an intermediate stage on the path to fibril formation. Copper binding may promote oligomerization. Interacts with GRB2, APP, ERI3/PRNPIP and SYN1. Mislocalized cytosolically exposed PrP interacts with MGRN1; this interaction alters MGRN1 subcellular location and causes lysosomal enlargement. Interacts with KIAA1191.

Its subcellular location is the cell membrane. It localises to the golgi apparatus. Its function is as follows. Its primary physiological function is unclear. Has cytoprotective activity against internal or environmental stresses. May play a role in neuronal development and synaptic plasticity. May be required for neuronal myelin sheath maintenance. May play a role in iron uptake and iron homeostasis. Soluble oligomers are toxic to cultured neuroblastoma cells and induce apoptosis (in vitro). Association with GPC1 (via its heparan sulfate chains) targets PRNP to lipid rafts. Also provides Cu(2+) or Zn(2+) for the ascorbate-mediated GPC1 deaminase degradation of its heparan sulfate side chains. In Bubalus bubalis (Domestic water buffalo), this protein is Major prion protein (PRNP).